The following is a 1046-amino-acid chain: MSRFFIDRPIFAWVLAIIAMLAGALSLTKMPISQYPNIAAPAVSIQVVYPGASAKTVQDTVVQVIEQQLNGLDGFRYMAAESASDGSMNIIVTFEQGTNPDIAQVQVQNKLQLATPRLPEEVQRQGLRVVKYQMNFFMVVGLVDKTGKMTNFDLGNLIASQLQDPISRINGVGDFLLFGSPYAMRIWLDPGKLNSYQLTPGDVAQAIREQNVQVSSGQLGGLPTRSGVQLNATVVGKTRMTTPAEFEEILVKVKADGSQVRVKDLGRVVLASENFAISAKYRGQDSAGLGLRLASGGNLLETVKAVKAELEKQKAYLPEGVEVIYPYDTSPVVEASIDSVVHTILEAVVLVFLVMFLFLQSLRATIIPTLAVPVVLLAAFALLPYFGISINVLTMYAMVLAIGLLVDDAIVVVENVERLMHDEGLSPLEATRKSMGQISGALVGIGMVLSAVFVPMAFFGGSAGIIYKQFAVTIVICMSLSVLVALIFTPALCATILKAPENDAHHEKKGFFGWFNRSFDRNSARFERGVGGILKHRGRYLLIFALITAGTGYLFTQIPKAFLPSEDQGLMMTEVRMPLNASAERTEVVLQEVKDYLLKEEGQLVDHVMTVNGFNFAGRGQNSGLVLVVLKDWAARQAAGEDVLSVAERANARFARIKDATVMAFVPPAVLEMGNAMGFDLYLQDNLGLGHESLMAARNQFLELAAENPSLRAVRPNGKDDEPQFQVKIDDEKARALQVSIASINDTMSAAWGSMYVNDFIDLGRVKRVYIQGVDSSRIAPEDFDKWYVRNALGEMVPFSAFATGEWIHGSPKLERYGGISAVNILGEPAPGFSTGDAMIAIAQIMQQLPSGIGLSYNGLSYEEIRTGDQAPMLYALTVLIVFLCLAALYESWSVPMSVILVVPLGIFGAVLATLWRGLEADVYFQVGLMTTVGLSAKNAILIIEFAKELYEKEGVPLVKAAIEAARLRLRPIIMTSLAFTFGVLPMARATGAGAGSQHSIATGVVGGMITATVLAVFFVPLFYVVVVKVFERNKKPAALAEEELA.

Helical transmembrane passes span 10 to 30 (IFAW…LTKM), 339 to 359 (SVVH…FLFL), 370 to 390 (LAVP…GISI), 392 to 412 (VLTM…AIVV), 440 to 460 (GALV…AFFG), 470 to 490 (FAVT…IFTP), 542 to 562 (LIFA…PKAF), 871 to 891 (APML…ALYE), 895 to 915 (VPMS…LATL), 927 to 947 (VGLM…IEFA), 973 to 993 (IIMT…ATGA), and 1008 to 1028 (GMIT…VVVV).

This sequence belongs to the resistance-nodulation-cell division (RND) (TC 2.A.6) family.

The protein resides in the cell inner membrane. Its function is as follows. The inner membrane transporter component of an inducible organic solvent efflux pump. Involved in export of toluene and styrene but not of m-xylene, propylbenzene or ethylbenzene. Is not involved in antibiotic or AMP efflux. The chain is Toluene efflux pump membrane transporter TtgE (ttgE) from Pseudomonas putida (strain DOT-T1E).